Here is a 1013-residue protein sequence, read N- to C-terminus: 2-oxoglutarate dehydrogenase, mitochondrial (1013 aa).

Residues 1 to 39 (MFTLKQVINKSIQTSMKNGVMSSAVKRSFSTVGGINQPK) constitute a mitochondrion transit peptide. Thiamine diphosphate is bound by residues Arg302, Asp403, Asn436, Ile438, and Gln664. Residues Asp403, Asn436, and Ile438 each coordinate Mg(2+).

This sequence belongs to the alpha-ketoglutarate dehydrogenase family. Homodimer. Component of the 2-oxoglutarate dehydrogenase complex. Thiamine diphosphate is required as a cofactor. It depends on Mg(2+) as a cofactor.

It is found in the mitochondrion matrix. The enzyme catalyses N(6)-[(R)-lipoyl]-L-lysyl-[protein] + 2-oxoglutarate + H(+) = N(6)-[(R)-S(8)-succinyldihydrolipoyl]-L-lysyl-[protein] + CO2. Its function is as follows. The 2-oxoglutarate dehydrogenase complex catalyzes the overall conversion of 2-oxoglutarate to succinyl-CoA and CO(2). It contains multiple copies of three enzymatic components: 2-oxoglutarate dehydrogenase (E1), dihydrolipoamide succinyltransferase (E2) and lipoamide dehydrogenase (E3). In Dictyostelium discoideum (Social amoeba), this protein is 2-oxoglutarate dehydrogenase, mitochondrial (ogdh).